The following is a 238-amino-acid chain: ATP synthase subunit a (238 aa).

A run of 5 helical transmembrane segments spans residues 18 to 38 (LTLLAVCIVTILLIFGFVFWA), 76 to 96 (YSLLLFTIFLFVAVANNLGLF), 114 to 134 (NLAFDLALSLFVTLLVHIEGI), 166 to 186 (SLAIRLFGNIFAGEVVTGLIV), and 193 to 213 (LYWWPIAFLVNIAWTAFSIFI).

This sequence belongs to the ATPase A chain family. As to quaternary structure, F-type ATPases have 2 components, CF(1) - the catalytic core - and CF(0) - the membrane proton channel. CF(1) has five subunits: alpha(3), beta(3), gamma(1), delta(1), epsilon(1). CF(0) has three main subunits: a(1), b(2) and c(9-12). The alpha and beta chains form an alternating ring which encloses part of the gamma chain. CF(1) is attached to CF(0) by a central stalk formed by the gamma and epsilon chains, while a peripheral stalk is formed by the delta and b chains.

It is found in the cell membrane. In terms of biological role, key component of the proton channel; it plays a direct role in the translocation of protons across the membrane. This is ATP synthase subunit a from Streptococcus equi subsp. zooepidemicus (strain H70).